Here is a 572-residue protein sequence, read N- to C-terminus: Moesin/ezrin/radixin homolog 1 (572 aa).

Positions 1–291 (MNVRVTTMDA…GNHELYMRRR (291 aa)) constitute an FERM domain. The disordered stretch occupies residues 456–491 (TTTPSHHHVEEEEEMDNEEELVNGENGNQDFSKDFD). Acidic residues predominate over residues 466–477 (EEEEMDNEEELV). Thr553 carries the phosphothreonine modification.

In terms of assembly, interacts with cytoskeletal actin.

Its subcellular location is the cell junction. It localises to the adherens junction. The protein resides in the cell projection. The protein localises to the microvillus. It is found in the rhabdomere. Its subcellular location is the cell membrane. It localises to the cytoplasm. The protein resides in the cytoskeleton. Involved in connections of major cytoskeletal structures to the plasma membrane. This chain is Moesin/ezrin/radixin homolog 1, found in Culex quinquefasciatus (Southern house mosquito).